Consider the following 831-residue polypeptide: Leucine--tRNA ligase (831 aa).

Positions 36 to 46 (PYPSGKLHIGH) match the 'HIGH' region motif. The short motif at 607–611 (KMSKS) is the 'KMSKS' region element. Residue K610 participates in ATP binding.

Belongs to the class-I aminoacyl-tRNA synthetase family.

It localises to the cytoplasm. The enzyme catalyses tRNA(Leu) + L-leucine + ATP = L-leucyl-tRNA(Leu) + AMP + diphosphate. This chain is Leucine--tRNA ligase, found in Neorickettsia sennetsu (strain ATCC VR-367 / Miyayama) (Ehrlichia sennetsu).